The chain runs to 640 residues: Zinc finger protein 549 (640 aa).

The KRAB domain maps to 27–140; that stretch reads VTFEDIAVYF…PYTSVASGKW (114 aa). A C2H2-type 1; degenerate zinc finger spans residues 217–241; the sequence is FQQRRYKCEQVFNEKVHVTEHQRVH. Residue lysine 223 forms a Glycyl lysine isopeptide (Lys-Gly) (interchain with G-Cter in SUMO2) linkage. The segment at 247–269 adopts a C2H2-type 2; degenerate zinc-finger fold; that stretch reads YKRREYGKSLNSKYLFVEHQRTH. 13 C2H2-type zinc fingers span residues 275–298, 304–326, 332–355, 361–383, 389–411, 417–439, 445–467, 473–495, 501–523, 529–551, 557–579, 585–607, and 613–635; these read YVCNICGKSFLHKQTLVGHQQRIH, YVCIECGKSLSSKYSLVEHQRTH, YVCNVCGKSFRHKQTFVGHQQRIH, YVCMECGKSFIHSYDRIRHQRVH, YQCSECGKSFIYKQSLLDHHRIH, YECKECGKAFIHKKRLLEHQRIH, YVCIICGKSFIRSSDYMRHQRIH, YECSDCGKAFISKQTLLKHHKIH, YECSECGKGFYLEVKLLQHQRIH, CECNECGKVFSHQKRLLEHQKVH, CECSECGKCFRHRTSLIQHQKVH, YNCTACEKAFIYKNKLVEHQRIH, and YECGKCGKAFNKRYSLVRHQKVH.

Belongs to the krueppel C2H2-type zinc-finger protein family.

The protein localises to the nucleus. Its function is as follows. May be involved in transcriptional regulation. This Homo sapiens (Human) protein is Zinc finger protein 549 (ZNF549).